The chain runs to 497 residues: Serine/threonine-protein phosphatase 2A 56 kDa regulatory subunit beta isoform (497 aa).

A compositionally biased stretch (low complexity) spans 1–19 (METKLPPASTPTSPSSPGL). Disordered stretches follow at residues 1 to 55 (METK…YQSN) and 475 to 497 (TQGA…GGQS). Residues serine 32, serine 35, serine 44, serine 46, serine 47, and serine 48 each carry the phosphoserine; by CLK2 modification. Residues 34–45 (RSLRRARPRRSH) show a composition bias toward basic residues.

It belongs to the phosphatase 2A regulatory subunit B56 family. As to quaternary structure, component of the serine/threonine-protein phosphatase 2A complex (PP2A). This complex consists of a common heterodimeric core enzyme, composed of a 36 kDa catalytic subunit (subunit C) and a 65 kDa constant scaffold subunit (PR65 or subunit A), that associates with a variety of regulatory subunits. Proteins that associate with the core dimer include three families of regulatory subunits B (the R2/B/PR55/B55, R3/B''/PR72/PR130/PR59 and R5/B'/B56 families), the 48 kDa variable regulatory subunit, viral proteins, and cell signaling molecules. Interacts with SGO1. Interacts with AKT1. Interacts with CUL3 and KLHL15; this interaction leads to proteasomal degradation. Post-translationally, ubiquitinated by E3 CUL3-KLHL15 complex; this modification leads to proteasomal degradation. In terms of tissue distribution, highest expression in brain.

It is found in the cytoplasm. As the regulatory component of the serine/threonine-protein phosphatase 2A (PP2A) holoenzyme, modulates substrate specificity, subcellular localization, and responsiveness to phosphorylation. The phosphorylated form mediates the interaction between PP2A and AKT1, leading to AKT1 dephosphorylation. This Homo sapiens (Human) protein is Serine/threonine-protein phosphatase 2A 56 kDa regulatory subunit beta isoform (PPP2R5B).